Reading from the N-terminus, the 89-residue chain is Small ribosomal subunit protein uS14 (89 aa).

The protein belongs to the universal ribosomal protein uS14 family. Part of the 30S ribosomal subunit. Contacts proteins S3 and S10.

Its function is as follows. Binds 16S rRNA, required for the assembly of 30S particles and may also be responsible for determining the conformation of the 16S rRNA at the A site. This Porphyromonas gingivalis (strain ATCC 33277 / DSM 20709 / CIP 103683 / JCM 12257 / NCTC 11834 / 2561) protein is Small ribosomal subunit protein uS14.